Consider the following 313-residue polypeptide: Ornithine carbamoyltransferase (313 aa).

Carbamoyl phosphate contacts are provided by residues 57–60 (STRT), Gln84, Arg108, and 135–138 (HPTQ). L-ornithine-binding positions include Asn167, Asp231, and 235 to 236 (SM). Carbamoyl phosphate contacts are provided by residues 272 to 273 (CL) and Arg300.

The protein belongs to the aspartate/ornithine carbamoyltransferase superfamily. OTCase family.

The protein localises to the cytoplasm. It carries out the reaction carbamoyl phosphate + L-ornithine = L-citrulline + phosphate + H(+). It functions in the pathway amino-acid biosynthesis; L-arginine biosynthesis; L-arginine from L-ornithine and carbamoyl phosphate: step 1/3. Functionally, reversibly catalyzes the transfer of the carbamoyl group from carbamoyl phosphate (CP) to the N(epsilon) atom of ornithine (ORN) to produce L-citrulline. This chain is Ornithine carbamoyltransferase, found in Caldanaerobacter subterraneus subsp. tengcongensis (strain DSM 15242 / JCM 11007 / NBRC 100824 / MB4) (Thermoanaerobacter tengcongensis).